Reading from the N-terminus, the 130-residue chain is Prefoldin subunit alpha (130 aa).

It belongs to the prefoldin subunit alpha family. In terms of assembly, heterohexamer of two alpha and four beta subunits.

It localises to the cytoplasm. Molecular chaperone capable of stabilizing a range of proteins. Seems to fulfill an ATP-independent, HSP70-like function in archaeal de novo protein folding. This chain is Prefoldin subunit alpha, found in Thermoplasma volcanium (strain ATCC 51530 / DSM 4299 / JCM 9571 / NBRC 15438 / GSS1).